The sequence spans 629 residues: tRNA uridine 5-carboxymethylaminomethyl modification enzyme MnmG (629 aa).

Residues 13 to 18 (GGGHAG), V125, and S180 contribute to the FAD site. 273 to 287 (GPRYCPSIEDKVMRF) serves as a coordination point for NAD(+). Q370 is a binding site for FAD.

Belongs to the MnmG family. Homodimer. Heterotetramer of two MnmE and two MnmG subunits. The cofactor is FAD.

The protein resides in the cytoplasm. Its function is as follows. NAD-binding protein involved in the addition of a carboxymethylaminomethyl (cmnm) group at the wobble position (U34) of certain tRNAs, forming tRNA-cmnm(5)s(2)U34. The polypeptide is tRNA uridine 5-carboxymethylaminomethyl modification enzyme MnmG (Psychromonas ingrahamii (strain DSM 17664 / CCUG 51855 / 37)).